A 267-amino-acid polypeptide reads, in one-letter code: tRNA-cytidine(32) 2-sulfurtransferase (267 aa).

Residues 37–42 carry the PP-loop motif motif; the sequence is SGGKDS. Cys112, Cys115, and Cys203 together coordinate [4Fe-4S] cluster.

This sequence belongs to the TtcA family. Homodimer. Mg(2+) is required as a cofactor. It depends on [4Fe-4S] cluster as a cofactor.

It localises to the cytoplasm. The enzyme catalyses cytidine(32) in tRNA + S-sulfanyl-L-cysteinyl-[cysteine desulfurase] + AH2 + ATP = 2-thiocytidine(32) in tRNA + L-cysteinyl-[cysteine desulfurase] + A + AMP + diphosphate + H(+). Its pathway is tRNA modification. Catalyzes the ATP-dependent 2-thiolation of cytidine in position 32 of tRNA, to form 2-thiocytidine (s(2)C32). The sulfur atoms are provided by the cysteine/cysteine desulfurase (IscS) system. The protein is tRNA-cytidine(32) 2-sulfurtransferase of Dichelobacter nodosus (strain VCS1703A).